We begin with the raw amino-acid sequence, 265 residues long: Protein Pars_0096 (265 aa).

It belongs to the CinA family.

The chain is Protein Pars_0096 from Pyrobaculum arsenaticum (strain DSM 13514 / JCM 11321 / PZ6).